Reading from the N-terminus, the 229-residue chain is Uracil-DNA glycosylase (229 aa).

The active-site Proton acceptor is D65.

It belongs to the uracil-DNA glycosylase (UDG) superfamily. UNG family.

The protein resides in the cytoplasm. The catalysed reaction is Hydrolyzes single-stranded DNA or mismatched double-stranded DNA and polynucleotides, releasing free uracil.. Its function is as follows. Excises uracil residues from the DNA which can arise as a result of misincorporation of dUMP residues by DNA polymerase or due to deamination of cytosine. This Limosilactobacillus fermentum (strain NBRC 3956 / LMG 18251) (Lactobacillus fermentum) protein is Uracil-DNA glycosylase.